Reading from the N-terminus, the 731-residue chain is T-cell activation Rho GTPase-activating protein (731 aa).

A Rho-GAP domain is found at 88 to 277 (QPLSIICGDS…FLIDNCFEIF (190 aa)). Disordered stretches follow at residues 288 to 421 (TSDD…AEDP), 464 to 507 (SLDA…IKKH), and 641 to 662 (HHVE…GLSP). A compositionally biased stretch (polar residues) spans 299-311 (SDVSTLQNDSAYD). Positions 319-329 (SNSSSGISSPS) are enriched in low complexity. Positions 380-399 (SMPSSQECLESRVTNQTLTK) are enriched in polar residues. Ser400 is modified (phosphoserine). Low complexity predominate over residues 464-480 (SLDASSDSSPVASPSSP). Composition is skewed to basic and acidic residues over residues 494 to 503 (KTEKGKPSRE) and 641 to 652 (HHVEDSRHRGSK).

In terms of biological role, may function as a GTPase-activating protein and may play important roles during T-cell activation. The chain is T-cell activation Rho GTPase-activating protein (TAGAP) from Homo sapiens (Human).